The primary structure comprises 423 residues: Histidine--tRNA ligase (423 aa).

This sequence belongs to the class-II aminoacyl-tRNA synthetase family. Homodimer.

It is found in the cytoplasm. The enzyme catalyses tRNA(His) + L-histidine + ATP = L-histidyl-tRNA(His) + AMP + diphosphate + H(+). In Prochlorococcus marinus (strain NATL1A), this protein is Histidine--tRNA ligase.